An 86-amino-acid chain; its full sequence is Small ribosomal subunit protein uS17 (86 aa).

This sequence belongs to the universal ribosomal protein uS17 family. In terms of assembly, part of the 30S ribosomal subunit.

In terms of biological role, one of the primary rRNA binding proteins, it binds specifically to the 5'-end of 16S ribosomal RNA. The sequence is that of Small ribosomal subunit protein uS17 from Streptococcus gordonii (strain Challis / ATCC 35105 / BCRC 15272 / CH1 / DL1 / V288).